The chain runs to 503 residues: MGSEATTAVNNLQQPLLESTKSEADFRMESVLTDTHLSYFRRIYLASLIEMKYLFHLAAPAIFVYVINNGMSMLTRIFAGRLGSMQLAAASLGNSGFNMFTLGLMLGMGSAVETLCGQAHGAHRYDMLGVYLQRSTIVLVITGLPMTLLFIFSKPLLISLGEPADVASVASVFVYGMIPMIFAYAVNFPIQKFLQSQSIVTPSAYISAATLVIHLILSWLSVFKFGWGLLGLSVVHSLSWWIIVLAQIIYIKISPRCRRTWDGFSWKAFDGLWDFFQLSAASAVMLCLESWYSQILVLLAGLLKDPELALDSLAICMSISAMSFMVSVGFNAAASVRVSNELGAGNPRSAAFSTAVTTGVSFLLSLFEAIVILSWRHVISYIFTDSPAVAEAVAELSPFLAITIVLNGVQPVLSGVAVGCGWQAYVAYVNIGCYYIVGIPIGYVLGFTYDMGARGIWTGMIGGTLMQTIILVIVTFRTDWDKEVEKASRRLDQWEDTSPLLKQ.

A run of 12 helical transmembrane segments spans residues 54–74, 87–107, 137–157, 166–186, 203–223, 225–245, 271–293, 313–333, 355–375, 399–419, 427–447, and 456–476; these read LFHL…MSML, LAAA…LMLG, IVLV…KPLL, VASV…AYAV, SAYI…LSVF, FGWG…IIVL, GLWD…SWYS, LAIC…FNAA, AVTT…ILSW, FLAI…VAVG, AYVN…VLGF, and IWTG…IVTF.

The protein belongs to the multi antimicrobial extrusion (MATE) (TC 2.A.66.1) family.

The protein localises to the membrane. The chain is Protein DETOXIFICATION 36 from Arabidopsis thaliana (Mouse-ear cress).